Consider the following 307-residue polypeptide: Acetyl-coenzyme A carboxylase carboxyl transferase subunit beta (307 aa).

Positions 1–21 (MAMADQRNDKPGRPAAQRERR) are disordered. Residues 43 to 307 (LWVKCPETGE…MGRERLSPAA (265 aa)) form the CoA carboxyltransferase N-terminal domain.

This sequence belongs to the AccD/PCCB family. As to quaternary structure, acetyl-CoA carboxylase is a heterohexamer composed of biotin carboxyl carrier protein (AccB), biotin carboxylase (AccC) and two subunits each of ACCase subunit alpha (AccA) and ACCase subunit beta (AccD).

The protein localises to the cytoplasm. The enzyme catalyses N(6)-carboxybiotinyl-L-lysyl-[protein] + acetyl-CoA = N(6)-biotinyl-L-lysyl-[protein] + malonyl-CoA. The protein operates within lipid metabolism; malonyl-CoA biosynthesis; malonyl-CoA from acetyl-CoA: step 1/1. In terms of biological role, component of the acetyl coenzyme A carboxylase (ACC) complex. Biotin carboxylase (BC) catalyzes the carboxylation of biotin on its carrier protein (BCCP) and then the CO(2) group is transferred by the transcarboxylase to acetyl-CoA to form malonyl-CoA. This Phenylobacterium zucineum (strain HLK1) protein is Acetyl-coenzyme A carboxylase carboxyl transferase subunit beta.